The chain runs to 160 residues: Ribosomal RNA large subunit methyltransferase H (160 aa).

Residues G108 and 127–132 contribute to the S-adenosyl-L-methionine site; that span reads FGLMTW.

It belongs to the RNA methyltransferase RlmH family. As to quaternary structure, homodimer.

The protein localises to the cytoplasm. It carries out the reaction pseudouridine(1915) in 23S rRNA + S-adenosyl-L-methionine = N(3)-methylpseudouridine(1915) in 23S rRNA + S-adenosyl-L-homocysteine + H(+). Its function is as follows. Specifically methylates the pseudouridine at position 1915 (m3Psi1915) in 23S rRNA. In Bartonella bacilliformis (strain ATCC 35685 / KC583 / Herrer 020/F12,63), this protein is Ribosomal RNA large subunit methyltransferase H.